The sequence spans 476 residues: UDP-N-acetylmuramate--L-alanine ligase (476 aa).

126-132 (GAHGKTT) is a binding site for ATP.

This sequence belongs to the MurCDEF family.

It localises to the cytoplasm. It catalyses the reaction UDP-N-acetyl-alpha-D-muramate + L-alanine + ATP = UDP-N-acetyl-alpha-D-muramoyl-L-alanine + ADP + phosphate + H(+). It participates in cell wall biogenesis; peptidoglycan biosynthesis. In terms of biological role, cell wall formation. This is UDP-N-acetylmuramate--L-alanine ligase from Psychrobacter sp. (strain PRwf-1).